Consider the following 311-residue polypeptide: Acetyl-coenzyme A carboxylase carboxyl transferase subunit alpha (311 aa).

The CoA carboxyltransferase C-terminal domain occupies 34 to 286 (EKDLQKEASK…KEYYLQNIRE (253 aa)).

This sequence belongs to the AccA family. As to quaternary structure, acetyl-CoA carboxylase is a heterohexamer composed of biotin carboxyl carrier protein (AccB), biotin carboxylase (AccC) and two subunits each of ACCase subunit alpha (AccA) and ACCase subunit beta (AccD).

The protein localises to the cytoplasm. The catalysed reaction is N(6)-carboxybiotinyl-L-lysyl-[protein] + acetyl-CoA = N(6)-biotinyl-L-lysyl-[protein] + malonyl-CoA. Its pathway is lipid metabolism; malonyl-CoA biosynthesis; malonyl-CoA from acetyl-CoA: step 1/1. Functionally, component of the acetyl coenzyme A carboxylase (ACC) complex. First, biotin carboxylase catalyzes the carboxylation of biotin on its carrier protein (BCCP) and then the CO(2) group is transferred by the carboxyltransferase to acetyl-CoA to form malonyl-CoA. This chain is Acetyl-coenzyme A carboxylase carboxyl transferase subunit alpha, found in Nitratiruptor sp. (strain SB155-2).